Reading from the N-terminus, the 341-residue chain is Glucokinase (341 aa).

Residue 18–23 coordinates ATP; it reads GDIGGT.

This sequence belongs to the bacterial glucokinase family.

The protein resides in the cytoplasm. The enzyme catalyses D-glucose + ATP = D-glucose 6-phosphate + ADP + H(+). The chain is Glucokinase from Rhizobium johnstonii (strain DSM 114642 / LMG 32736 / 3841) (Rhizobium leguminosarum bv. viciae).